Consider the following 206-residue polypeptide: Peptidyl-tRNA hydrolase (206 aa).

Y14 contacts tRNA. Catalysis depends on H19, which acts as the Proton acceptor. 2 residues coordinate tRNA: F64 and N66. Positions 185 to 206 are disordered; it reads VNGEAPKKSKDQAKEPANEQPR. The segment covering 189 to 206 has biased composition (basic and acidic residues); it reads APKKSKDQAKEPANEQPR.

It belongs to the PTH family. Monomer.

It is found in the cytoplasm. It carries out the reaction an N-acyl-L-alpha-aminoacyl-tRNA + H2O = an N-acyl-L-amino acid + a tRNA + H(+). Its function is as follows. Hydrolyzes ribosome-free peptidyl-tRNAs (with 1 or more amino acids incorporated), which drop off the ribosome during protein synthesis, or as a result of ribosome stalling. Functionally, catalyzes the release of premature peptidyl moieties from peptidyl-tRNA molecules trapped in stalled 50S ribosomal subunits, and thus maintains levels of free tRNAs and 50S ribosomes. In Herpetosiphon aurantiacus (strain ATCC 23779 / DSM 785 / 114-95), this protein is Peptidyl-tRNA hydrolase.